A 230-amino-acid polypeptide reads, in one-letter code: 7-cyano-7-deazaguanine synthase (230 aa).

ATP is bound at residue 16–26 (LSGGLDSATVV). Cys195, Cys205, Cys208, and Cys211 together coordinate Zn(2+).

It belongs to the QueC family. Zn(2+) serves as cofactor.

The enzyme catalyses 7-carboxy-7-deazaguanine + NH4(+) + ATP = 7-cyano-7-deazaguanine + ADP + phosphate + H2O + H(+). Its pathway is purine metabolism; 7-cyano-7-deazaguanine biosynthesis. In terms of biological role, catalyzes the ATP-dependent conversion of 7-carboxy-7-deazaguanine (CDG) to 7-cyano-7-deazaguanine (preQ(0)). The protein is 7-cyano-7-deazaguanine synthase of Pseudomonas fluorescens (strain Pf0-1).